The chain runs to 2006 residues: Sodium channel protein type 2 subunit alpha (2006 aa).

Serine 4 is subject to Phosphoserine. Residues 28–61 are disordered; the sequence is RIAEEKAKRPKQERKDEDDENGPKPNSDLEAGKS. Lysine 38 participates in a covalent cross-link: Glycyl lysine isopeptide (Lys-Gly) (interchain with G-Cter in SUMO1). An I repeat occupies 111–456; the sequence is ILTPFNPIRK…QQMLEQLKKQ (346 aa). Residues 130–148 form a helical membrane-spanning segment; sequence LFNVLIMCTILTNCVFMTM. The chain crosses the membrane as a helical span at residues 156 to 176; that stretch reads KNVEYTFTGIYTFESLIKILA. A helical transmembrane segment spans residues 191-208; that stretch reads WNWLDFTVITFAYVTEFV. Residues 215-231 form a helical membrane-spanning segment; it reads ALRTFRVLRALKTISVI. Residues 251–270 form a helical membrane-spanning segment; sequence VMILTVFCLSVFALIGLQLF. Cysteine 278 and cysteine 338 form a disulfide bridge. Asparagine 285, asparagine 291, asparagine 297, asparagine 303, asparagine 308, and asparagine 340 each carry an N-linked (GlcNAc...) asparagine glycan. Residues 370–394 constitute an intramembrane region (pore-forming); that stretch reads FSWAFLSLFRLMTQDFWENLYQLTL. Residues 402–422 form a helical membrane-spanning segment; it reads MIFFVLVIFLGSFYLINLILA. Serine 468, serine 471, serine 484, serine 526, serine 528, serine 531, serine 553, serine 554, serine 558, serine 573, serine 576, serine 589, serine 610, serine 623, serine 687, serine 688, and serine 722 each carry phosphoserine. A disordered region spans residues 494-529; that stretch reads SSKSEKELKNRRKKKKQKEQAGEEEKEDAVRKSASE. A compositionally biased stretch (basic and acidic residues) spans 511-529; that stretch reads KEQAGEEEKEDAVRKSASE. The tract at residues 589–635 is disordered; it reads SENDFADDEHSTFEDNDSRRDSLFVPHRHGERRPSNVSQASRASRGI. Residues 596–610 are compositionally biased toward basic and acidic residues; that stretch reads DEHSTFEDNDSRRDS. Residues 742-1014 form an II repeat; sequence CCKPWLKVKH…QIAVGRMQKG (273 aa). The helical transmembrane segment at 761-779 threads the bilayer; the sequence is FVDLAITICIVLNTLFMAM. Residues 791–810 traverse the membrane as a helical segment; sequence VLSVGNLVFTGIFTAEMFLK. A helical membrane pass occupies residues 825-844; that stretch reads NIFDGFIVSLSLMELGLANV. Residues 847 to 864 traverse the membrane as a helical segment; sequence LSVLRSFRLLRVFKLAKS. The helical transmembrane segment at 881-899 threads the bilayer; sequence ALGNLTLVLAIIVFIFAVV. Cysteine 913 and cysteine 919 form a disulfide bridge. Positions 918–919 are binds SCN2B; sequence DC. Positions 929–949 form an intramembrane region, pore-forming; sequence FFHSFLIVFRVLCGEWIETMW. A disulfide bridge links cysteine 951 with cysteine 960. A helical transmembrane segment spans residues 963-983; sequence VFMMVMVIGNLVVLNLFLALL. A disordered region spans residues 1121-1167; that stretch reads EEFSSESDMEESKEKLNATSSSEGSTVDIGAPAEGEQPEAEPEESLE. Over residues 1156-1167 the composition is skewed to acidic residues; it reads EQPEAEPEESLE. The III repeat unit spans residues 1191 to 1505; it reads KGKLWWNLRK…KKYYNAMKKL (315 aa). A helical membrane pass occupies residues 1211 to 1228; the sequence is FETFIVFMILLSSGALAF. Residues 1242–1260 form a helical membrane-spanning segment; that stretch reads MLEYADKVFTYIFILEMLL. The chain crosses the membrane as a helical span at residues 1275–1293; the sequence is WCWLDFLIVDVSLVSLTAN. The helical transmembrane segment at 1302-1320 threads the bilayer; the sequence is AIKSLRTLRALRPLRALSR. A helical membrane pass occupies residues 1338–1357; sequence IMNVLLVCLIFWLIFSIMGV. An intrachain disulfide couples cysteine 1367 to cysteine 1387. Positions 1410–1431 form an intramembrane region, pore-forming; that stretch reads GLGYLSLLQVATFKGWMDIMYA. The chain crosses the membrane as a helical span at residues 1449–1470; sequence YMYLYFVIFIIFGSFFTLNLFI. Serine 1507 is modified (phosphoserine). The stretch at 1514–1812 is one IV repeat; the sequence is IPRPANKFQG…WEKFDPDATQ (299 aa). The chain crosses the membrane as a helical span at residues 1534–1551; it reads FDISIMILICLNMVTMMV. Residues 1563-1581 traverse the membrane as a helical segment; that stretch reads ILYWINLVFIVLFTGECVL. A helical membrane pass occupies residues 1594–1611; it reads GWNIFDFVVVILSIVGMF. Residues 1625-1641 form a helical membrane-spanning segment; it reads LFRVIRLARIGRILRLI. The chain crosses the membrane as a helical span at residues 1661-1678; the sequence is LFNIGLLLFLVMFIYAIF. An intramembrane region (pore-forming) is located at residues 1701 to 1723; sequence FGNSMICLFQITTSAGWDGLLAP. A disulfide bond links cysteine 1732 and cysteine 1747. Residues 1754-1776 traverse the membrane as a helical segment; it reads IFFFVSYIIISFLVVVNMYIAVI. One can recognise an IQ domain in the interval 1906 to 1935; it reads EEVSAIVIQRAYRRYLLKQKVKKVSSIYKK. At serine 1931 the chain carries Phosphoserine. The span at 1934-1965 shows a compositional bias: basic and acidic residues; the sequence is KKDKGKEDEGTPIKEDIITDKLNENSTPEKTD. Positions 1934–2006 are disordered; the sequence is KKDKGKEDEG…KGKDIRESKK (73 aa). 3 positions are modified to phosphothreonine: threonine 1944, threonine 1964, and threonine 1967. Serine 1972 carries the post-translational modification Phosphoserine. The span at 1980 to 2006 shows a compositional bias: basic and acidic residues; the sequence is TKPEKEKFEKDKSEKEDKGKDIRESKK.

It belongs to the sodium channel (TC 1.A.1.10) family. Nav1.2/SCN2A subfamily. In terms of assembly, heterooligomer of a large alpha subunit and a smaller beta subunit. Heterooligomer with SCN2B or SCN4B; disulfide-linked. Interacts with NEDD4L. Interacts with CALM. Interacts with TMEM233. Sumoylated at Lys-38. Sumoylation is induced by hypoxia, increases voltage-gated sodium current and mediates the early response to acute hypoxia in neurons. Sumoylated SCN2A is located at the cell membrane. Expressed in brain (at protein level). Detected in hippocampus, cortex and brain stem.

It localises to the cell membrane. The enzyme catalyses Na(+)(in) = Na(+)(out). Mediates the voltage-dependent sodium ion permeability of excitable membranes. Assuming opened or closed conformations in response to the voltage difference across the membrane, the protein forms a sodium-selective channel through which Na(+) ions may pass in accordance with their electrochemical gradient. Implicated in the regulation of hippocampal replay occurring within sharp wave ripples (SPW-R) important for memory. This is Sodium channel protein type 2 subunit alpha from Mus musculus (Mouse).